We begin with the raw amino-acid sequence, 304 residues long: UDP-N-acetylenolpyruvoylglucosamine reductase (304 aa).

One can recognise an FAD-binding PCMH-type domain in the interval 34-198 (IGGKADFLVW…LEVVFALRPG (165 aa)). The active site involves Arg177. Catalysis depends on Ser227, which acts as the Proton donor. Glu297 is an active-site residue.

Belongs to the MurB family. The cofactor is FAD.

The protein localises to the cytoplasm. It carries out the reaction UDP-N-acetyl-alpha-D-muramate + NADP(+) = UDP-N-acetyl-3-O-(1-carboxyvinyl)-alpha-D-glucosamine + NADPH + H(+). The protein operates within cell wall biogenesis; peptidoglycan biosynthesis. Its function is as follows. Cell wall formation. The chain is UDP-N-acetylenolpyruvoylglucosamine reductase from Geobacillus kaustophilus (strain HTA426).